The sequence spans 540 residues: Protein dml-1 (540 aa).

The tract at residues 517–540 (NELAEMADEYHEGWSSGSDDGDDD) is disordered.

Belongs to the misato family.

The protein resides in the mitochondrion. Its function is as follows. Involved in the partitioning of the mitochondrial organelle and mitochondrial DNA (mtDNA) inheritance. The chain is Protein dml-1 (dml-1) from Neurospora crassa (strain ATCC 24698 / 74-OR23-1A / CBS 708.71 / DSM 1257 / FGSC 987).